A 742-amino-acid chain; its full sequence is MALPVEEWRRSAARCWAALEPALRERLAAAPLGEALRMGCGLFGPEEAALQRLCRRARTGKEPAAARFYREEGNRQFGRCCYRDAVRLYSQAAAHEPPRSPEVALCFANRSAALFHLGHFEVCLEDIARAESHGYPDRLLPKVLLRKAECLLRLGRLQDATDTLTAVENKMAVDGIMTSPIHRMLLKKLSQLKTEIHEGSCPEPAREADGDVQRESEIWEENGSISGASSSLSLNFSTERGRHLVASQDILPGQNLLKEKAFVSVLCPGEGDSLLLQDSSETVWDTRVTNADLYCHHCLKQLLASIPCCGCSYAKYCSQNCADVAWEQYHRTECPLGALLLTLGVFFHVALRTVLLAGFSEVSRLVEWSRDDSNKDLCNAEAGGEHPSEALDTRAGRKVIPGCNDNGQYQSSYQAVFNLLPHVEKHSPEHKFLCMLSIVAICKKLQETGLEAAVLNGESSTTGSEQKTCGKTSDELSPELMIMAEAMLRHVLQLQCNAQAITVMQELESGDGAVVNKKPVRLATAFFPVLSLLNHSCSPNISVSFSGTAATVRASQPIPSGQEIFHCYGEEMLCCSSEACAFSVSRERLSQRLLDLQQQMEKALELLRDSKADEAIKMLLKCQIDARNFLSPEHLLMGELEDHLAQVYATLGKWQEAARHLGRSIQLVEMHHGPSSVEMGHELFKLAQILFNGFAVSEALSTIQRAEEILSVHCGPQSTQIQELQEMKTCLLELPRSILQRT.

110 to 112 (RSA) is a binding site for S-adenosyl-L-methionine. The SET domain maps to 230 to 569 (SSLSLNFSTE…SGQEIFHCYG (340 aa)). Residues Cys-295, Cys-298, Cys-308, Cys-311, Cys-317, Cys-321, His-330, and Cys-334 each coordinate Zn(2+). An MYND-type zinc finger spans residues 295-334 (CHHCLKQLLASIPCCGCSYAKYCSQNCADVAWEQYHRTEC). S-adenosyl-L-methionine contacts are provided by residues Asn-418, 534–535 (NH), and Tyr-568.

It belongs to the class V-like SAM-binding methyltransferase superfamily.

It is found in the nucleus. The protein resides in the cytoplasm. The catalysed reaction is L-lysyl-[protein] + S-adenosyl-L-methionine = N(6)-methyl-L-lysyl-[protein] + S-adenosyl-L-homocysteine + H(+). In terms of biological role, protein-lysine N-methyltransferase. Monomethylates PRMT5, modulating its transcriptional activity. May also act as a histone methyltransferase. Plays a critical role in cardiac development. Acts as a key epigenetic regulator of gene expression during cardiac development via its dual activities as a methyltransferase and negative regulator of HDAC1. This chain is Protein-lysine N-methyltransferase SMYD4 (SMYD4), found in Gallus gallus (Chicken).